The primary structure comprises 361 residues: UDP-3-O-acylglucosamine N-acyltransferase (361 aa).

Catalysis depends on His253, which acts as the Proton acceptor.

This sequence belongs to the transferase hexapeptide repeat family. LpxD subfamily. As to quaternary structure, homotrimer.

The enzyme catalyses a UDP-3-O-[(3R)-3-hydroxyacyl]-alpha-D-glucosamine + a (3R)-hydroxyacyl-[ACP] = a UDP-2-N,3-O-bis[(3R)-3-hydroxyacyl]-alpha-D-glucosamine + holo-[ACP] + H(+). The protein operates within bacterial outer membrane biogenesis; LPS lipid A biosynthesis. In terms of biological role, catalyzes the N-acylation of UDP-3-O-acylglucosamine using 3-hydroxyacyl-ACP as the acyl donor. Is involved in the biosynthesis of lipid A, a phosphorylated glycolipid that anchors the lipopolysaccharide to the outer membrane of the cell. This Burkholderia pseudomallei (strain 1710b) protein is UDP-3-O-acylglucosamine N-acyltransferase.